The sequence spans 133 residues: Ribosome-binding factor A (133 aa).

It belongs to the RbfA family. Monomer. Binds 30S ribosomal subunits, but not 50S ribosomal subunits or 70S ribosomes.

The protein resides in the cytoplasm. One of several proteins that assist in the late maturation steps of the functional core of the 30S ribosomal subunit. Associates with free 30S ribosomal subunits (but not with 30S subunits that are part of 70S ribosomes or polysomes). Required for efficient processing of 16S rRNA. May interact with the 5'-terminal helix region of 16S rRNA. The polypeptide is Ribosome-binding factor A (Psychromonas ingrahamii (strain DSM 17664 / CCUG 51855 / 37)).